We begin with the raw amino-acid sequence, 263 residues long: Shikimate dehydrogenase (NADP(+)) (263 aa).

Shikimate contacts are provided by residues 16–18 (SKS) and Thr-65. Catalysis depends on Lys-69, which acts as the Proton acceptor. Shikimate contacts are provided by Asn-90 and Asp-105. NADP(+) is bound by residues 125-129 (GAGGS), Ser-181, and Leu-208. Tyr-210 contributes to the shikimate binding site. Gly-230 serves as a coordination point for NADP(+). Shikimate is bound at residue Gln-237.

Belongs to the shikimate dehydrogenase family. In terms of assembly, homodimer.

It carries out the reaction shikimate + NADP(+) = 3-dehydroshikimate + NADPH + H(+). It functions in the pathway metabolic intermediate biosynthesis; chorismate biosynthesis; chorismate from D-erythrose 4-phosphate and phosphoenolpyruvate: step 4/7. Functionally, involved in the biosynthesis of the chorismate, which leads to the biosynthesis of aromatic amino acids. Catalyzes the reversible NADPH linked reduction of 3-dehydroshikimate (DHSA) to yield shikimate (SA). The polypeptide is Shikimate dehydrogenase (NADP(+)) (Helicobacter pylori (strain ATCC 700392 / 26695) (Campylobacter pylori)).